The primary structure comprises 328 residues: Tetraacyldisaccharide 4'-kinase (328 aa).

Position 55–62 (55–62 (TAGGNGKT)) interacts with ATP.

The protein belongs to the LpxK family.

It carries out the reaction a lipid A disaccharide + ATP = a lipid IVA + ADP + H(+). The protein operates within glycolipid biosynthesis; lipid IV(A) biosynthesis; lipid IV(A) from (3R)-3-hydroxytetradecanoyl-[acyl-carrier-protein] and UDP-N-acetyl-alpha-D-glucosamine: step 6/6. Transfers the gamma-phosphate of ATP to the 4'-position of a tetraacyldisaccharide 1-phosphate intermediate (termed DS-1-P) to form tetraacyldisaccharide 1,4'-bis-phosphate (lipid IVA). The sequence is that of Tetraacyldisaccharide 4'-kinase from Escherichia coli (strain 55989 / EAEC).